Reading from the N-terminus, the 122-residue chain is Alkaline proteinase inhibitor (122 aa).

The first 25 residues, 1 to 25, serve as a signal peptide directing secretion; that stretch reads MPRFSHLIGCVWQVLFVSAGAQAMA. The segment at 101–122 is disordered; sequence QKEGEYTGRTPSGADVTLQRTN.

It belongs to the protease inhibitor I38 family.

It is found in the periplasm. In terms of biological role, inhibitor of the alkaline protease. The protein is Alkaline proteinase inhibitor (inh) of Pseudomonas tolaasii.